The primary structure comprises 223 residues: Ribose-5-phosphate isomerase A (223 aa).

Substrate-binding positions include 32 to 35, 85 to 88, and 98 to 101; these read TGST, DGAD, and KGGG. The active-site Proton acceptor is glutamate 107. Lysine 125 is a binding site for substrate.

This sequence belongs to the ribose 5-phosphate isomerase family. As to quaternary structure, homodimer.

The enzyme catalyses aldehydo-D-ribose 5-phosphate = D-ribulose 5-phosphate. The protein operates within carbohydrate degradation; pentose phosphate pathway; D-ribose 5-phosphate from D-ribulose 5-phosphate (non-oxidative stage): step 1/1. Functionally, catalyzes the reversible conversion of ribose-5-phosphate to ribulose 5-phosphate. This chain is Ribose-5-phosphate isomerase A, found in Pseudomonas savastanoi pv. phaseolicola (strain 1448A / Race 6) (Pseudomonas syringae pv. phaseolicola (strain 1448A / Race 6)).